The primary structure comprises 436 residues: F-box/LRR-repeat protein At2g40920 (436 aa).

An F-box domain is found at 48 to 98; it reads EYLLQNFDLDHVMEILMRFPLTSLTRFKCVSKQWSSLISSRYFCNLLYTTV. LRR repeat units follow at residues 276–301 and 393–416; these read NCVV…IHLD and YYNL…WFDK.

This chain is F-box/LRR-repeat protein At2g40920, found in Arabidopsis thaliana (Mouse-ear cress).